The following is a 282-amino-acid chain: NADPH-dependent 7-cyano-7-deazaguanine reductase (282 aa).

90 to 92 (IES) contributes to the substrate binding site. Residue 92-93 (SK) coordinates NADPH. The Thioimide intermediate role is filled by cysteine 190. Catalysis depends on aspartate 197, which acts as the Proton donor. 229–230 (HE) lines the substrate pocket. Position 258–259 (258–259 (RG)) interacts with NADPH.

Belongs to the GTP cyclohydrolase I family. QueF type 2 subfamily. In terms of assembly, homodimer.

The protein localises to the cytoplasm. It catalyses the reaction 7-aminomethyl-7-carbaguanine + 2 NADP(+) = 7-cyano-7-deazaguanine + 2 NADPH + 3 H(+). The protein operates within tRNA modification; tRNA-queuosine biosynthesis. Catalyzes the NADPH-dependent reduction of 7-cyano-7-deazaguanine (preQ0) to 7-aminomethyl-7-deazaguanine (preQ1). The sequence is that of NADPH-dependent 7-cyano-7-deazaguanine reductase from Aeromonas salmonicida (strain A449).